The following is a 472-amino-acid chain: Succinate-semialdehyde dehydrogenase [NADP(+)] (472 aa).

NADP(+) is bound by residues 134-135, 158-161, and 210-211; these read WN, KHAS, and GS. Catalysis depends on Glu232, which acts as the Proton acceptor. NADP(+) is bound at residue Leu233. Cys266 functions as the Nucleophile in the catalytic mechanism. Glu363 is a binding site for NADP(+).

It belongs to the aldehyde dehydrogenase family.

It carries out the reaction succinate semialdehyde + NADP(+) + H2O = succinate + NADPH + 2 H(+). Its function is as follows. Catalyzes the NADP(+)-dependent oxidation of succinate semialdehyde to succinate. It is believed to be the main source of succinate semialdehyde dehydrogenase activity in Mycobacterium. In Mycobacterium avium (strain 104), this protein is Succinate-semialdehyde dehydrogenase [NADP(+)] (gabD1).